A 435-amino-acid chain; its full sequence is uncharacterized protein (435 aa).

3 WD repeats span residues 105–149 (DLEY…GIDS), 164–204 (HNNA…SKTQ), and 207–247 (AHDK…HSTI). Ser-266 bears the Phosphoserine mark. A WD 4 repeat occupies 313-353 (GHKGDVNAVKWMPGSKSKLATCGDDCVVSLWDLDQPVNPSP). The disordered stretch occupies residues 352–371 (SPAPTLSVSGTTPGMTGSTS). The span at 358–371 (SVSGTTPGMTGSTS) shows a compositional bias: low complexity. At Ser-388 the chain carries Phosphoserine.

Its subcellular location is the cytoplasm. The protein localises to the golgi apparatus. This is an uncharacterized protein from Schizosaccharomyces pombe (strain 972 / ATCC 24843) (Fission yeast).